The sequence spans 397 residues: Mannan endo-1,4-beta-mannosidase 1 (397 aa).

Positions 1-23 (MSYARRSCICGLFLLFLALVCEA) are cleaved as a signal peptide. Substrate-binding residues include tryptophan 83 and asparagine 198. The active-site Proton donor is glutamate 199. Substrate is bound at residue tyrosine 276. Glutamate 316 acts as the Nucleophile in catalysis. Tryptophan 354 contributes to the substrate binding site.

This sequence belongs to the glycosyl hydrolase 5 (cellulase A) family.

It is found in the secreted. The catalysed reaction is Random hydrolysis of (1-&gt;4)-beta-D-mannosidic linkages in mannans, galactomannans and glucomannans.. The protein is Mannan endo-1,4-beta-mannosidase 1 (MAN1) of Solanum lycopersicum (Tomato).